Consider the following 115-residue polypeptide: Large ribosomal subunit protein uL22 (115 aa).

The protein belongs to the universal ribosomal protein uL22 family. Part of the 50S ribosomal subunit.

Functionally, this protein binds specifically to 23S rRNA; its binding is stimulated by other ribosomal proteins, e.g. L4, L17, and L20. It is important during the early stages of 50S assembly. It makes multiple contacts with different domains of the 23S rRNA in the assembled 50S subunit and ribosome. Its function is as follows. The globular domain of the protein is located near the polypeptide exit tunnel on the outside of the subunit, while an extended beta-hairpin is found that lines the wall of the exit tunnel in the center of the 70S ribosome. This Limosilactobacillus reuteri subsp. reuteri (strain JCM 1112) (Lactobacillus reuteri) protein is Large ribosomal subunit protein uL22.